The following is a 472-amino-acid chain: Eukaryotic translation initiation factor 2 subunit 3 (472 aa).

Alanine 2 carries the post-translational modification N-acetylalanine; partial. Serine 16 is subject to Phosphoserine. A tr-type G domain is found at 39-248; it reads QATINIGTIG…IVKKIPVPPR (210 aa). Residues 48-55 form a G1 region; that stretch reads GHVAHGKS. 51 to 56 is a GTP binding site; sequence AHGKST. Residues 76–80 are G2; the sequence is NITIK. Residues 134–137 form a G3 region; sequence DCPG. Residues 190–193 and 225–227 each bind GTP; these read NKID and SAQ. The segment at 190–193 is G4; sequence NKID. A G5 region spans residues 225 to 227; sequence SAQ. An interacts with CDC123 region spans residues 457–469; that stretch reads GQIRRGVTIKPTV.

Belongs to the TRAFAC class translation factor GTPase superfamily. Classic translation factor GTPase family. EIF2G subfamily. As to quaternary structure, eukaryotic translation initiation factor 2 eIF2 is a heterotrimeric complex composed of an alpha (EIF2S1), a beta (EIF2S2) and a gamma (EIF2S3) chain. eIF2 is member of the 43S pre-initiation complex (43S PIC). Interacts (via C-terminus) with CDC123; the interaction is direct. As to expression, expressed in testis, brain, liver and muscle.

The protein resides in the cytoplasm. The protein localises to the cytosol. It carries out the reaction GTP + H2O = GDP + phosphate + H(+). Member of the eIF2 complex that functions in the early steps of protein synthesis by forming a ternary complex with GTP and initiator tRNA. This complex binds to a 40S ribosomal subunit, followed by mRNA binding to form the 43S pre-initiation complex (43S PIC). Junction of the 60S ribosomal subunit to form the 80S initiation complex is preceded by hydrolysis of the GTP bound to eIF2 and release of an eIF2-GDP binary complex. In order for eIF2 to recycle and catalyze another round of initiation, the GDP bound to eIF2 must exchange with GTP by way of a reaction catalyzed by eIF-2B. This chain is Eukaryotic translation initiation factor 2 subunit 3 (EIF2S3), found in Homo sapiens (Human).